A 213-amino-acid chain; its full sequence is Orotate phosphoribosyltransferase (213 aa).

Position 26 (Lys-26) interacts with 5-phospho-alpha-D-ribose 1-diphosphate. 34–35 provides a ligand contact to orotate; it reads FF. 5-phospho-alpha-D-ribose 1-diphosphate-binding positions include 72–73, Arg-99, Lys-100, Lys-103, His-105, and 124–132; these read YK and DDVITAGTA. 2 residues coordinate orotate: Thr-128 and Arg-156.

Belongs to the purine/pyrimidine phosphoribosyltransferase family. PyrE subfamily. As to quaternary structure, homodimer. Mg(2+) serves as cofactor.

It catalyses the reaction orotidine 5'-phosphate + diphosphate = orotate + 5-phospho-alpha-D-ribose 1-diphosphate. Its pathway is pyrimidine metabolism; UMP biosynthesis via de novo pathway; UMP from orotate: step 1/2. Catalyzes the transfer of a ribosyl phosphate group from 5-phosphoribose 1-diphosphate to orotate, leading to the formation of orotidine monophosphate (OMP). The sequence is that of Orotate phosphoribosyltransferase from Erwinia tasmaniensis (strain DSM 17950 / CFBP 7177 / CIP 109463 / NCPPB 4357 / Et1/99).